The sequence spans 583 residues: MNIQYLLLQRVHEALTLINTKSFLNLIQVQQSNHIRFGDYQINGMINISKHLQIPIKDFSNIFIKTINLKGIAKIIKFEPPGFINIFLSPTWIENKINHIIDLPKLGIDLIPSKNIVIDYSSPNIAKEMHVGHLRSTIIGDSIARILSFLGHNVIRSNHIGDWGTQFGMLIAYIKKHKINYLSLNDSQQISMLEYYYQESKKEYDSDPNFAELSRKYVVKLQKGDVYCRKIWKYLVDISISNNQKIYDRLNVTLKKKDIMGESMYHDMLPYIITDLKNKKLAVTSDHATIVFLNQNKNSKKNNPFGVIIQKKDGGYLYSTTDIACIKYRCETLHADRIIYYIDSRQKQHLMQAWEIAYQAGYITKAVVFEHHVCGMLLDKNKKPFKTRSGNTIKLITLLNEAFNKAYNLILNKNLNLEYKKINHLAHIISIGAIKYSELSKNRTTNYIFNWDKILNFDGNTAPYIQYAYTRISSIFKKINHRSELQEKKYQIFLSSQEEILLAICLLQFHETLITVADRGTPHILCGYLYKLSTLFSLFYEHCPILKTECTYTKYSRLKLSFITAQILKKGLNLLGIETSEYM.

Positions 123–133 (PNIAKEMHVGH) match the 'HIGH' region motif.

The protein belongs to the class-I aminoacyl-tRNA synthetase family. In terms of assembly, monomer.

It is found in the cytoplasm. The catalysed reaction is tRNA(Arg) + L-arginine + ATP = L-arginyl-tRNA(Arg) + AMP + diphosphate. The sequence is that of Arginine--tRNA ligase from Blochmanniella floridana.